A 196-amino-acid polypeptide reads, in one-letter code: Ribosome maturation factor RimP (196 aa).

A disordered region spans residues 176 to 196 (ETNFDEVSTELETDTPSEGDQ). The span at 177 to 196 (TNFDEVSTELETDTPSEGDQ) shows a compositional bias: acidic residues.

It belongs to the RimP family.

The protein localises to the cytoplasm. Its function is as follows. Required for maturation of 30S ribosomal subunits. This is Ribosome maturation factor RimP from Roseobacter denitrificans (strain ATCC 33942 / OCh 114) (Erythrobacter sp. (strain OCh 114)).